The primary structure comprises 401 residues: Sodium/glutamate symporter (401 aa).

At 1 to 6 (MFHLDT) the chain is on the periplasmic side. A helical transmembrane segment spans residues 7–24 (LATLVAATLTLLLGRKLV). Residues 25–32 (HSVSFLKK) are Cytoplasmic-facing. The helical transmembrane segment at 33-52 (YTIPEPVAGGLLVALALLVL) threads the bilayer. Topologically, residues 53 to 69 (KKSMGWEVNFDMSLRDP) are periplasmic. Residues 70–87 (LMLAFFATIGLNANIASL) form a helical membrane-spanning segment. Topologically, residues 88–93 (RAGGRV) are cytoplasmic. Residues 94–116 (VGIFLIVVVGLLVMQNAIGIGMA) traverse the membrane as a helical segment. Residues 117-156 (SLLGLDPLMGLLAGSITLSGGHGTGAAWSKLFIERYGFTN) are Periplasmic-facing. A helical membrane pass occupies residues 157-179 (ATEVAMACATFGLVLGGLIGGPV). The Cytoplasmic segment spans residues 180-212 (ARYLVKHSTTPNGIPDDQEVPTAFEKPDVGRMI). Residues 213–235 (TSLVLIETIALIAICLTVGKIVA) traverse the membrane as a helical segment. Residues 236 to 244 (QLLAGTAFE) lie on the Periplasmic side of the membrane. The chain crosses the membrane as a helical span at residues 245–267 (LPTFVCVLFVGVILSNGLSIMGF). The Cytoplasmic segment spans residues 268–276 (YRVFERAVS). A helical membrane pass occupies residues 277 to 292 (VLGNVSLSLFLAMALM). The Periplasmic segment spans residues 293–301 (GLKLWELAS). A helical membrane pass occupies residues 302-324 (LALPMLAILVVQTIFMALYAIFV). At 325-367 (TWRMMGKNYDAAVLAAGHCGFGLGATPTAIANMQAITERFGPS) the chain is on the cytoplasmic side. Residues 368–390 (HMAFLVVPMVGAFFIDIVNALVI) traverse the membrane as a helical segment. Over 391 to 401 (KLYLMLPIFAG) the chain is Periplasmic.

This sequence belongs to the glutamate:Na(+) symporter (ESS) (TC 2.A.27) family.

It localises to the cell inner membrane. Its activity is regulated as follows. Inhibited by the uncoupler carbonylcyanide m-chlorophenylhydrazone (CCCP) and the ionophore monensin. In terms of biological role, catalyzes the sodium-dependent, binding-protein-independent transport of glutamate. In Escherichia coli (strain K12), this protein is Sodium/glutamate symporter.